Here is a 396-residue protein sequence, read N- to C-terminus: Tryptophan synthase beta chain (396 aa).

At lysine 88 the chain carries N6-(pyridoxal phosphate)lysine.

The protein belongs to the TrpB family. In terms of assembly, tetramer of two alpha and two beta chains. It depends on pyridoxal 5'-phosphate as a cofactor.

It catalyses the reaction (1S,2R)-1-C-(indol-3-yl)glycerol 3-phosphate + L-serine = D-glyceraldehyde 3-phosphate + L-tryptophan + H2O. It functions in the pathway amino-acid biosynthesis; L-tryptophan biosynthesis; L-tryptophan from chorismate: step 5/5. Functionally, the beta subunit is responsible for the synthesis of L-tryptophan from indole and L-serine. In Leptospira biflexa serovar Patoc (strain Patoc 1 / Ames), this protein is Tryptophan synthase beta chain.